Reading from the N-terminus, the 256-residue chain is Ribonuclease 3 (256 aa).

Residues 3-125 enclose the RNase III domain; the sequence is LDALQQRLGY…IVGAVFLDAG (123 aa). Residue E38 participates in Mg(2+) binding. D42 is an active-site residue. D111 and E114 together coordinate Mg(2+). E114 is an active-site residue. The DRBM domain occupies 152–222; the sequence is DAKTLLQEYL…AKLALDEVQK (71 aa). The interval 229-256 is disordered; the sequence is KRSRAERTGKTRKQPVPPDPQLSLRLKE.

Belongs to the ribonuclease III family. Homodimer. Mg(2+) serves as cofactor.

It localises to the cytoplasm. It carries out the reaction Endonucleolytic cleavage to 5'-phosphomonoester.. Digests double-stranded RNA. Involved in the processing of primary rRNA transcript to yield the immediate precursors to the large and small rRNAs (23S and 16S). Processes some mRNAs, and tRNAs when they are encoded in the rRNA operon. Processes pre-crRNA and tracrRNA of type II CRISPR loci if present in the organism. The chain is Ribonuclease 3 from Cupriavidus pinatubonensis (strain JMP 134 / LMG 1197) (Cupriavidus necator (strain JMP 134)).